Here is a 452-residue protein sequence, read N- to C-terminus: Ethanolamine kinase 1 (452 aa).

A disordered region spans residues 26–64 (AVQTRIGNSAASRRSPAARPPVPAPPALPRGRPGTEGST). Pro residues predominate over residues 43–53 (ARPPVPAPPAL).

It belongs to the choline/ethanolamine kinase family. In terms of tissue distribution, expressed in kidney, liver, placenta, heart, leukocyte, ovary and testis.

It is found in the cytoplasm. It catalyses the reaction ethanolamine + ATP = phosphoethanolamine + ADP + H(+). It participates in phospholipid metabolism; phosphatidylethanolamine biosynthesis; phosphatidylethanolamine from ethanolamine: step 1/3. Highly specific for ethanolamine phosphorylation. May be a rate-controlling step in phosphatidylethanolamine biosynthesis. This is Ethanolamine kinase 1 from Homo sapiens (Human).